Consider the following 382-residue polypeptide: Serine/threonine-protein kinase US3 homolog (382 aa).

The span at 1 to 10 shows a compositional bias: basic and acidic residues; sequence MENKQCDHLT. Residues 1-75 form a disordered region; it reads MENKQCDHLT…ASESDEDDDD (75 aa). A compositionally biased stretch (polar residues) spans 12 to 24; that stretch reads WFSTTSDASESMD. Over residues 45–75 the composition is skewed to acidic residues; sequence ADEDLYSDISEGDLEYSDCDSASESDEDDDD. A Protein kinase domain is found at 93–379; sequence YTVIKTLTPG…AEELLSYPMF (287 aa). Residues 99–107 and Lys-122 contribute to the ATP site; that span reads LTPGSEGRV. Asp-207 serves as the catalytic Proton acceptor.

The protein belongs to the protein kinase superfamily. Ser/Thr protein kinase family. Phosphorylated by protein 49; this phosphorylation regulates subsequent phosphorylation of proteins 26 and 29 by US3 homolog. Autophosphorylated.

It localises to the host cytoplasm. The protein localises to the host nucleus. The enzyme catalyses L-seryl-[protein] + ATP = O-phospho-L-seryl-[protein] + ADP + H(+). It catalyses the reaction L-threonyl-[protein] + ATP = O-phospho-L-threonyl-[protein] + ADP + H(+). In terms of biological role, multifunctional serine/threonine kinase that plays a role in several processes including egress of virus particles from the nucleus, modulation of the actin cytoskeleton and inhibition of apoptosis. Phosphorylates protein 26 and 29, two critical regulators of capsid budding from nucleus to endoplasmic reticulum, thereby facilitating virion egress. Modulates and redistributes host components of the nuclear envelope, including LMNA, emerin/EMD and the nuclear matrix protein MATR3. Phosphorylates envelope glycoprotein B (gB), probably to direct it to the cell surface. Promotes virus intracellular spread by restructuring host cell cytoskeleton. Blocks host apoptosis to extend cell survival and allow efficient viral replication. Promotes viral gene expression by phosphorylating host HDAC2 to reduce viral genome silencing. This chain is Serine/threonine-protein kinase US3 homolog, found in Equine herpesvirus 1 (strain Ab4p) (EHV-1).